Reading from the N-terminus, the 60-residue chain is Cytochrome c oxidase subunit 9, mitochondrial (60 aa).

Over 1–15 the chain is Mitochondrial matrix; it reads MSAIAPITGTIRKRI. The helical transmembrane segment at 16-38 threads the bilayer; the sequence is LADITIGFAIGGAMASYWWWGFH. The Mitochondrial intermembrane segment spans residues 39-57; the sequence is KNIINKREAYYAKLAEQKA. The propeptide at 58–60 is removed in mature form; that stretch reads AEN.

This sequence belongs to the fungal cytochrome c oxidase subunit 7a family. In terms of assembly, component of the cytochrome c oxidase (complex IV, CIV), a multisubunit enzyme composed of a catalytic core of 3 subunits and several supernumerary subunits. The complex exists as a monomer or a dimer and forms supercomplexes (SCs) in the inner mitochondrial membrane with ubiquinol-cytochrome c oxidoreductase (cytochrome b-c1 complex, complex III, CIII).

Its subcellular location is the mitochondrion inner membrane. Its pathway is energy metabolism; oxidative phosphorylation. In terms of biological role, component of the cytochrome c oxidase, the last enzyme in the mitochondrial electron transport chain which drives oxidative phosphorylation. The respiratory chain contains 3 multisubunit complexes succinate dehydrogenase (complex II, CII), ubiquinol-cytochrome c oxidoreductase (cytochrome b-c1 complex, complex III, CIII) and cytochrome c oxidase (complex IV, CIV), that cooperate to transfer electrons derived from NADH and succinate to molecular oxygen, creating an electrochemical gradient over the inner membrane that drives transmembrane transport and the ATP synthase. Cytochrome c oxidase is the component of the respiratory chain that catalyzes the reduction of oxygen to water. Electrons originating from reduced cytochrome c in the intermembrane space (IMS) are transferred via the dinuclear copper A center (CU(A)) of subunit 2 and heme A of subunit 1 to the active site in subunit 1, a binuclear center (BNC) formed by heme A3 and copper B (CU(B)). The BNC reduces molecular oxygen to 2 water molecules using 4 electrons from cytochrome c in the IMS and 4 protons from the mitochondrial matrix. This chain is Cytochrome c oxidase subunit 9, mitochondrial (COX9), found in Kluyveromyces lactis (strain ATCC 8585 / CBS 2359 / DSM 70799 / NBRC 1267 / NRRL Y-1140 / WM37) (Yeast).